The following is a 525-amino-acid chain: Vesicular inhibitory amino acid transporter (525 aa).

At 1 to 132 (MATLLRSKLT…WNVTNAIQGM (132 aa)) the chain is on the cytoplasmic side. A helical transmembrane segment spans residues 133–153 (FVLGLPYAILHGGYLGLFLII). Residues 154 to 204 (FAAVVCCYTGKILIACLYEENEDGEVVRVRDSYVAIANACCAPRFPTLGGR) are Lumenal, vesicle-facing. Tyr-186 is subject to 3'-nitrotyrosine. A helical membrane pass occupies residues 205 to 225 (VVNVAQIIELVMTCILYVVVS). Topologically, residues 226-265 (GNLMYNSFPGLPVSQKSWSIIATAVLLPCAFLKNLKAVSK) are cytoplasmic. Residues 266 to 286 (FSLLCTLAHFVINILVIAYCL) form a helical membrane-spanning segment. Residues 287–305 (SRARDWAWEKVKFYIDVKK) are Lumenal, vesicle-facing. A helical membrane pass occupies residues 306-326 (FPISIGIIVFSYTSQIFLPSL). Residues 327 to 341 (EGNMQQPSEFHCMMN) lie on the Cytoplasmic side of the membrane. Residues 342-362 (WTHIAACVLKGLFALVAYLTW) form a helical membrane-spanning segment. Over 363 to 383 (ADETKEVITDNLPGSIRAVVN) the chain is Lumenal, vesicle. A helical membrane pass occupies residues 384–404 (LFLVAKALLSYPLPFFAAVEV). At 405–438 (LEKSLFQEGSRAFFPACYGGDGRLKSWGLTLRCA) the chain is on the cytoplasmic side. The chain crosses the membrane as a helical span at residues 439–459 (LVVFTLLMAIYVPHFALLMGL). Over 460–461 (TG) the chain is Lumenal, vesicle. Residues 462–482 (SLTGAGLCFLLPSLFHLRLLW) traverse the membrane as a helical segment. Over 483–489 (RKLLWHQ) the chain is Cytoplasmic. A helical membrane pass occupies residues 490–510 (VFFDVAIFVIGGICSVSGFVH). The Lumenal, vesicle portion of the chain corresponds to 511–525 (SLEGLIEAYRTNAED).

Belongs to the amino acid/polyamine transporter 2 family. In terms of tissue distribution, brain and retina. Localized in horizontal cell tips at both rod and cone terminals.

The protein resides in the cytoplasmic vesicle membrane. It is found in the presynapse. The catalysed reaction is 4-aminobutanoate(out) + n H(+)(in) = 4-aminobutanoate(in) + n H(+)(out). It catalyses the reaction glycine(out) + n H(+)(in) = glycine(in) + n H(+)(out). It carries out the reaction beta-alanine(out) + n H(+)(in) = beta-alanine(in) + n H(+)(out). With respect to regulation, chloride ions activate 4-aminobutanoate/H(+) transport. Functionally, antiporter that exchanges vesicular protons for cytosolic 4-aminobutanoate or to a lesser extend glycine, thus allowing their secretion from nerve terminals. The transport is equally dependent on the chemical and electrical components of the proton gradient. May also transport beta-alanine. Acidification of GABAergic synaptic vesicles is a prerequisite for 4-aminobutanoate uptake. This is Vesicular inhibitory amino acid transporter from Mus musculus (Mouse).